Reading from the N-terminus, the 930-residue chain is Protein translocase subunit SecA (930 aa).

ATP-binding positions include Gln87, 105–109 (GEGKT), and Asp515. The Zn(2+) site is built by Cys914, Cys916, Cys925, and His926.

It belongs to the SecA family. In terms of assembly, monomer and homodimer. Part of the essential Sec protein translocation apparatus which comprises SecA, SecYEG and auxiliary proteins SecDF-YajC and YidC. Zn(2+) is required as a cofactor.

It is found in the cell inner membrane. Its subcellular location is the cytoplasm. The enzyme catalyses ATP + H2O + cellular proteinSide 1 = ADP + phosphate + cellular proteinSide 2.. Functionally, part of the Sec protein translocase complex. Interacts with the SecYEG preprotein conducting channel. Has a central role in coupling the hydrolysis of ATP to the transfer of proteins into and across the cell membrane, serving both as a receptor for the preprotein-SecB complex and as an ATP-driven molecular motor driving the stepwise translocation of polypeptide chains across the membrane. The polypeptide is Protein translocase subunit SecA (Cupriavidus metallidurans (strain ATCC 43123 / DSM 2839 / NBRC 102507 / CH34) (Ralstonia metallidurans)).